The sequence spans 88 residues: DNA-directed RNA polymerase subunit omega (88 aa).

This sequence belongs to the RNA polymerase subunit omega family. The RNAP catalytic core consists of 2 alpha, 1 beta, 1 beta' and 1 omega subunit. When a sigma factor is associated with the core the holoenzyme is formed, which can initiate transcription.

It catalyses the reaction RNA(n) + a ribonucleoside 5'-triphosphate = RNA(n+1) + diphosphate. Promotes RNA polymerase assembly. Latches the N- and C-terminal regions of the beta' subunit thereby facilitating its interaction with the beta and alpha subunits. The chain is DNA-directed RNA polymerase subunit omega from Yersinia pestis (strain Pestoides F).